A 651-amino-acid chain; its full sequence is MAAAAATAVGPGAGSAGVAGPGGAGPCATVSVFPGARLLTIGDANGEIQRHAEQQALRLEVRAGPDAAGIALYSHEDVCVFKCSVSRETECSRVGRQSFIITLGCNSVLIQFATPHDFCSFYNILKTCRGHTLERSVFSERTEESSAVQYFQFYGYLSQQQNMMQDYVRTGTYQRAILQNHTDFKDKIVLDVGCGSGILSFFAAQAGARKIYAVEASTMAQHAEVLVKSNNLTDRIVVIPGKVEEVSLPEQVDIIISEPMGYMLFNERMLESYLHAKKYLKPSGNMFPTIGDVHLAPFTDEQLYMEQFTKANFWYQPSFHGVDLSALRGAAVDEYFRQPVVDTFDIRILMAKSVKYTVNFLEAKEGDLHRIEIPFKFHMLHSGLVHGLAFWFDVAFIGSIMTVWLSTAPTEPLTHWYQVRCLFQSPLFAKAGDTLSGTCLLIANKRQSYDISIVAQVDQTGSKSSNLLDLKNPFFRYTGTTPSPPPGSHYTSPSENMWNTGSTYNLSSGVAVAGMPTAYDLSSVIAGGSSVGHNNLIPLANTGIVNHTHSRMGSIMSTGIVQGNRVAGPWAGDLPPGLRTRSSYQWGPGRLRGHAGSSVPMTCPTGSSGAQGGGGSSSAHYAVNNQFTMGGPAISMASPMSIPTNTMHYGS.

The interaction with C9orf72 stretch occupies residues 28 to 139 (ATVSVFPGAR…GHTLERSVFS (112 aa)). The SAM-dependent MTase PRMT-type domain occupies 147–454 (AVQYFQFYGY…KRQSYDISIV (308 aa)). Residues Gln160, Arg169, Gly193, and Glu215 each coordinate S-adenosyl-L-methionine. Ser217 carries the post-translational modification Phosphoserine. Residue Lys228 forms a Glycyl lysine isopeptide (Lys-Gly) (interchain with G-Cter in ubiquitin) linkage. 2 residues coordinate S-adenosyl-L-methionine: Glu244 and Ser272. Residues 347 to 380 (RILMAKSVKYTVNFLEAKEGDLHRIEIPFKFHML) are required for nuclear translocation. Residues 500–651 (TGSTYNLSSG…IPTNTMHYGS (152 aa)) are transactivation domain. Dimethylated arginine is present on Arg551. The segment at 581–617 (RSSYQWGPGRLRGHAGSSVPMTCPTGSSGAQGGGGSS) is disordered.

Belongs to the class I-like SAM-binding methyltransferase superfamily. Protein arginine N-methyltransferase family. As to quaternary structure, homodimer. Interacts with NR1H4. Interacts with SNRPC. Interacts with the C-terminus of NCOA2/GRIP1, NCO3/ACTR and NCOA1/SRC1. Part of a complex consisting of CARM1, EP300/P300 and NCOA2/GRIP1. Interacts with FLII, TP53, myogenic factor MEF2, EP300/P300, TRIM24, CREBBP and CTNNB1. Interacts with RELA. Identified in a complex containing CARM1, TRIM24 and NCOA2/GRIP1. Interacts with NCOA3/SRC3. Interacts with SKP2. Interacts (via PH domain-like fold) with C9orf72. Interacts with PARP1; promoting PARP1 recruimtent to replication forks. In terms of processing, auto-methylated on Arg-551. Methylation enhances transcription coactivator activity. Methylation is required for its role in the regulation of pre-mRNA alternative splicing. Phosphorylation at Ser-217 interferes with S-adenosyl-L-methionine binding and strongly reduces methyltransferase activity. Phosphorylation at Ser-217 is strongly increased during mitosis, and decreases rapidly to a very low, basal level after entry into the G1 phase of the cell cycle. Phosphorylation at Ser-217 may promote location in the cytosol. Post-translationally, ubiquitinated by E3 ubiquitin-protein ligase complex containing FBXO9 at Lys-228; leading to proteasomal degradation. As to expression, isoform 1 is expressed at low levels in brain, liver and testis. Isoform 2 is highly expressed in brain, liver, skeletal muscle and testis. In terms of tissue distribution, isoform 3 is highly expressed in spleen, liver and kidney. As to expression, isoform 4 is expressed in spleen, liver and kidney.

It localises to the nucleus. It is found in the cytoplasm. The protein resides in the chromosome. It carries out the reaction L-arginyl-[protein] + 2 S-adenosyl-L-methionine = N(omega),N(omega)-dimethyl-L-arginyl-[protein] + 2 S-adenosyl-L-homocysteine + 2 H(+). Methylation of H3R17 (H3R17me) by CARM1 is stimulated by preacetylation of H3 'Lys-18' (H3K18ac) H3 'Lys-23' (H3K23ac) by EP300 and blocked by citrullination of H3 'Arg-17' (H3R17ci) by PADI4. In terms of biological role, methylates (mono- and asymmetric dimethylation) the guanidino nitrogens of arginyl residues in several proteins involved in DNA packaging, transcription regulation, pre-mRNA splicing, and mRNA stability. Recruited to promoters upon gene activation together with histone acetyltransferases from EP300/P300 and p160 families, methylates histone H3 at 'Arg-17' (H3R17me), forming mainly asymmetric dimethylarginine (H3R17me2a), leading to activation of transcription via chromatin remodeling. During nuclear hormone receptor activation and TCF7L2/TCF4 activation, acts synergically with EP300/P300 and either one of the p160 histone acetyltransferases NCOA1/SRC1, NCOA2/GRIP1 and NCOA3/ACTR or CTNNB1/beta-catenin to activate transcription. During myogenic transcriptional activation, acts together with NCOA3/ACTR as a coactivator for MEF2C. During monocyte inflammatory stimulation, acts together with EP300/P300 as a coactivator for NF-kappa-B. Acts as a coactivator for PPARG, promotes adipocyte differentiation and the accumulation of brown fat tissue. Plays a role in the regulation of pre-mRNA alternative splicing by methylation of splicing factors. Also seems to be involved in p53/TP53 transcriptional activation. Methylates EP300/P300, both at 'Arg-2142', which may loosen its interaction with NCOA2/GRIP1, and at 'Arg-580' and 'Arg-604' in the KIX domain, which impairs its interaction with CREB and inhibits CREB-dependent transcriptional activation. Also methylates arginine residues in RNA-binding proteins PABPC1, ELAVL1 and ELAV4, which may affect their mRNA-stabilizing properties and the half-life of their target mRNAs. Acts as a transcriptional coactivator of ACACA/acetyl-CoA carboxylase by enriching H3R17 methylation at its promoter, thereby positively regulating fatty acid synthesis. Independently of its methyltransferase activity, involved in replication fork progression: promotes PARP1 recruitment to replication forks, leading to poly-ADP-ribosylation of chromatin at replication forks and reduced fork speed. Functionally, isoform 3 specifically affects pre-mRNA splicing. This activity is independent from methyltransferase activity. This Rattus norvegicus (Rat) protein is Histone-arginine methyltransferase CARM1 (Carm1).